A 124-amino-acid chain; its full sequence is Ragulator complex protein LAMTOR3 (124 aa).

The tract at residues 57-70 is required for interaction with LAMTOR2; sequence TDQGSKLGLSKNKS.

It belongs to the LAMTOR3 family. In terms of assembly, part of the Ragulator complex composed of LAMTOR1, LAMTOR2, LAMTOR3, LAMTOR4 and LAMTOR5. LAMTOR4 and LAMTOR5 form a heterodimer that interacts, through LAMTOR1, with a LAMTOR2, LAMTOR3 heterodimer. Interacts with LAMTOR1 and LAMTOR2; the interaction is direct. The Ragulator complex interacts with both the mTORC1 complex and heterodimers constituted of the Rag GTPases RagA/RRAGA, RagB/RRAGB, RagC/RRAGC and RagD/RRAGD; regulated by amino acid availability. The Ragulator complex interacts with SLC38A9; the probable amino acid sensor. Component of the lysosomal folliculin complex (LFC), composed of FLCN, FNIP1 (or FNIP2), RagA/RRAGA or RagB/RRAGB GDP-bound, RagC/RRAGC or RagD/RRAGD GTP-bound, and Ragulator. Interacts with MAP2K1/MEK1 and MAPK2. Interacts with MORG1.

It localises to the late endosome membrane. As part of the Ragulator complex it is involved in amino acid sensing and activation of mTORC1, a signaling complex promoting cell growth in response to growth factors, energy levels, and amino acids. Activated by amino acids through a mechanism involving the lysosomal V-ATPase, the Ragulator plays a dual role for the small GTPases Rag (RagA/RRAGA, RagB/RRAGB, RagC/RRAGC and/or RagD/RRAGD): it (1) acts as a guanine nucleotide exchange factor (GEF), activating the small GTPases Rag and (2) mediates recruitment of Rag GTPases to the lysosome membrane. Activated Ragulator and Rag GTPases function as a scaffold recruiting mTORC1 to lysosomes where it is in turn activated. Adapter protein that enhances the efficiency of the MAP kinase cascade facilitating the activation of MAPK2. This is Ragulator complex protein LAMTOR3 from Homo sapiens (Human).